A 146-amino-acid chain; its full sequence is Hemoglobin subunit beta (146 aa).

Residue valine 1 is modified to N-acetylvaline. Positions 2 to 146 constitute a Globin domain; it reads HLTGEEKSAV…VANALAHKYH (145 aa). Residue threonine 12 is modified to Phosphothreonine. Residue serine 44 is modified to Phosphoserine. Lysine 59 is modified (N6-acetyllysine). Histidine 63 is a heme b binding site. Lysine 82 carries the N6-acetyllysine modification. Histidine 92 is a heme b binding site. Position 93 is an S-nitrosocysteine (cysteine 93). Position 144 is an N6-acetyllysine (lysine 144).

It belongs to the globin family. Heterotetramer of two alpha chains and two beta chains. Red blood cells.

Involved in oxygen transport from the lung to the various peripheral tissues. The sequence is that of Hemoglobin subunit beta (HBB) from Nycticebus coucang (Slow loris).